The chain runs to 381 residues: Cytochrome b (381 aa).

The next 4 membrane-spanning stretches (helical) occupy residues 33-53 (FGSL…FLAM), 77-98 (WLLR…FLHV), 113-133 (WNIG…GYVL), and 178-198 (FFAF…VHLL). Heme b-binding residues include histidine 83 and histidine 97. Heme b contacts are provided by histidine 182 and histidine 196. A ubiquinone is bound at residue histidine 201. Helical transmembrane passes span 226–246 (IKDA…ALFS), 288–308 (LGGV…PLLH), 320–340 (ISQT…WIGG), and 347–367 (FIII…VLMP).

It belongs to the cytochrome b family. In terms of assembly, the cytochrome bc1 complex contains 11 subunits: 3 respiratory subunits (MT-CYB, CYC1 and UQCRFS1), 2 core proteins (UQCRC1 and UQCRC2) and 6 low-molecular weight proteins (UQCRH/QCR6, UQCRB/QCR7, UQCRQ/QCR8, UQCR10/QCR9, UQCR11/QCR10 and a cleavage product of UQCRFS1). This cytochrome bc1 complex then forms a dimer. Heme b serves as cofactor.

It localises to the mitochondrion inner membrane. Component of the ubiquinol-cytochrome c reductase complex (complex III or cytochrome b-c1 complex) that is part of the mitochondrial respiratory chain. The b-c1 complex mediates electron transfer from ubiquinol to cytochrome c. Contributes to the generation of a proton gradient across the mitochondrial membrane that is then used for ATP synthesis. The sequence is that of Cytochrome b (MT-CYB) from Pseudantechinus bilarni (Sandstone dibbler).